The sequence spans 153 residues: UPF0540 protein At1g62220 (153 aa).

An N-terminal signal peptide occupies residues 1-21 (MNATKFVVLLVISVLCAIVTA). 2 disordered regions span residues 63 to 82 (SSAT…YENG) and 122 to 153 (ARAN…GKKD). The segment covering 122–132 (ARANGKVASAS) has biased composition (low complexity). Basic residues predominate over residues 141–153 (KKGKGKKGKGKKD).

The protein belongs to the UPF0540 family.

This is UPF0540 protein At1g62220 from Arabidopsis thaliana (Mouse-ear cress).